A 726-amino-acid polypeptide reads, in one-letter code: Catalase-peroxidase (726 aa).

Residues 1–33 form a disordered region; it reads MSTSDDIHNTTATGKCPFHQGGHDQSAGAGTTT. A cross-link (tryptophyl-tyrosyl-methioninium (Trp-Tyr) (with M-252)) is located at residues 105 to 226; sequence WHGAGTYRSI…LGATEMGLIY (122 aa). Residue His106 is the Proton acceptor of the active site. The segment at residues 226–252 is a cross-link (tryptophyl-tyrosyl-methioninium (Tyr-Met) (with W-105)); that stretch reads YVNPEGPDHSGEPLSAAAAIRATFGNM. His267 is a heme b binding site.

This sequence belongs to the peroxidase family. Peroxidase/catalase subfamily. In terms of assembly, homodimer or homotetramer. Heme b serves as cofactor. Formation of the three residue Trp-Tyr-Met cross-link is important for the catalase, but not the peroxidase activity of the enzyme.

It carries out the reaction H2O2 + AH2 = A + 2 H2O. The catalysed reaction is 2 H2O2 = O2 + 2 H2O. Functionally, bifunctional enzyme with both catalase and broad-spectrum peroxidase activity. The polypeptide is Catalase-peroxidase (Shigella sonnei (strain Ss046)).